The primary structure comprises 332 residues: Fructose-1,6-bisphosphatase class 1 (332 aa).

Mg(2+)-binding residues include Glu89, Asp110, Leu112, and Asp113. Residues 113 to 116 (DGSS), Asn206, Tyr239, 257 to 259 (YLY), and Lys269 contribute to the substrate site. Glu275 serves as a coordination point for Mg(2+).

It belongs to the FBPase class 1 family. In terms of assembly, homotetramer. The cofactor is Mg(2+).

It localises to the cytoplasm. The catalysed reaction is beta-D-fructose 1,6-bisphosphate + H2O = beta-D-fructose 6-phosphate + phosphate. Its pathway is carbohydrate biosynthesis; gluconeogenesis. The chain is Fructose-1,6-bisphosphatase class 1 from Salmonella gallinarum (strain 287/91 / NCTC 13346).